Reading from the N-terminus, the 235-residue chain is Aspartate/glutamate leucyltransferase (235 aa).

Belongs to the R-transferase family. Bpt subfamily.

The protein resides in the cytoplasm. It catalyses the reaction N-terminal L-glutamyl-[protein] + L-leucyl-tRNA(Leu) = N-terminal L-leucyl-L-glutamyl-[protein] + tRNA(Leu) + H(+). The catalysed reaction is N-terminal L-aspartyl-[protein] + L-leucyl-tRNA(Leu) = N-terminal L-leucyl-L-aspartyl-[protein] + tRNA(Leu) + H(+). Functionally, functions in the N-end rule pathway of protein degradation where it conjugates Leu from its aminoacyl-tRNA to the N-termini of proteins containing an N-terminal aspartate or glutamate. This Pseudomonas putida (strain GB-1) protein is Aspartate/glutamate leucyltransferase.